Here is a 156-residue protein sequence, read N- to C-terminus: Cyanate hydratase (156 aa).

Catalysis depends on residues arginine 96, glutamate 99, and serine 122.

The protein belongs to the cyanase family.

It catalyses the reaction cyanate + hydrogencarbonate + 3 H(+) = NH4(+) + 2 CO2. Catalyzes the reaction of cyanate with bicarbonate to produce ammonia and carbon dioxide. This is Cyanate hydratase from Burkholderia pseudomallei (strain 1106a).